The chain runs to 194 residues: MTEYVLILISAVLVNNFVLVQFLGLCPFMGVSNKVETAMGMSLATTFVLTLSSVLAYLTWAYILVPFELEYLRTISFILVIAVAVQFTEMFVKKASPLLYRVLGVFLPLITSNCAVLGVALLNVRQEDATFMSSLTYGFGAAIGFSLVLILFAAMRERIAVADVPEAFRGPSIGLITAGLMSLAFMGFSGLIKL.

6 consecutive transmembrane segments (helical) span residues 5–25 (VLIL…FLGL), 47–67 (FVLT…LVPF), 72–92 (LRTI…EMFV), 102–122 (VLGV…VALL), 135–155 (LTYG…FAAM), and 172–192 (SIGL…SGLI).

It belongs to the NqrDE/RnfAE family. The complex is composed of six subunits: RnfA, RnfB, RnfC, RnfD, RnfE and RnfG.

The protein localises to the cell inner membrane. Its function is as follows. Part of a membrane-bound complex that couples electron transfer with translocation of ions across the membrane. This Alcanivorax borkumensis (strain ATCC 700651 / DSM 11573 / NCIMB 13689 / SK2) protein is Ion-translocating oxidoreductase complex subunit A.